A 137-amino-acid chain; its full sequence is ATP synthase epsilon chain, sodium ion specific (137 aa).

It belongs to the ATPase epsilon chain family. F-type ATPases have 2 components, CF(1) - the catalytic core - and CF(0) - the membrane proton channel. CF(1) has five subunits: alpha(3), beta(3), gamma(1), delta(1), epsilon(1). CF(0) has three main subunits: a, b and c.

It is found in the cell inner membrane. Its function is as follows. Produces ATP from ADP in the presence of a sodium gradient across the membrane. In Propionigenium modestum, this protein is ATP synthase epsilon chain, sodium ion specific (atpC).